The chain runs to 429 residues: Histidine--tRNA ligase (429 aa).

It belongs to the class-II aminoacyl-tRNA synthetase family. As to quaternary structure, homodimer.

It localises to the cytoplasm. It carries out the reaction tRNA(His) + L-histidine + ATP = L-histidyl-tRNA(His) + AMP + diphosphate + H(+). This Rippkaea orientalis (strain PCC 8801 / RF-1) (Cyanothece sp. (strain PCC 8801)) protein is Histidine--tRNA ligase.